The following is a 115-amino-acid chain: Large ribosomal subunit protein bL20c (115 aa).

Belongs to the bacterial ribosomal protein bL20 family.

It is found in the plastid. It localises to the chloroplast. Functionally, binds directly to 23S ribosomal RNA and is necessary for the in vitro assembly process of the 50S ribosomal subunit. It is not involved in the protein synthesizing functions of that subunit. This chain is Large ribosomal subunit protein bL20c (rpl20), found in Cyanidium caldarium (Red alga).